Here is a 44-residue protein sequence, read N- to C-terminus: Cuticle protein CP466 (44 aa).

2 repeat units span residues leucine 3–leucine 20 and valine 27–phenylalanine 44.

As to expression, calcified shell.

The chain is Cuticle protein CP466 from Cancer pagurus (Rock crab).